Here is a 679-residue protein sequence, read N- to C-terminus: MEGNLISMREDHSFHVRYRMEASCLELALEGERLCKSGDCRAGVSFFEAAVQVGTEDLKTLSAIYSQLGNAYFYLHDYAKALEYHHHDLTLARTIGDQLGEAKASGNLGNTLKVLGNFDEAIVCCQRHLDISRELNDKVGEARALYNLGNVYHAKGKSFGCPGPQDTGEFPEDVRNALQAAVDLYEENLSLVTALGDRAAQGRAFGNLGNTHYLLGNFRDAVIAHEQRLLIAKEFGDKAAERRAYSNLGNAYIFLGEFETASEYYKKTLLLARQLKDRAVEAQSCYSLGNTYTLLQDYEKAIDYHLKHLAIAQELKDRIGEGRACWSLGNAYTALGNHDQAMHFAEKHLEISREVGDKSGELTARLNLSDLQMVLGLSYSTNNSMMSENIEIDGSLHGAGAKLGRRHSMENLELMKLTPEKVPNWNSEILAKQKPLIAKPSAKLLFVNRLKGKKYKSGSACTKVLQDASNSVDHRAPRSQKKISSDTIGDEGFFDLLRRFQSNRMDDQRCHLQGNCRTTSTAAASATPKLMKAPSVSVVSPNTDEFLDLLASSQSRRLDDQRASFSNLPGLRLTKGNSPSVLERLMTNDKKEPDEDFFDILVKCQGSRLDDQRCAPPSAATKGPTVPDEDFFSLILRSQAKRMDEQRVLLQRDPNRDSEFGLKELLQNNALLEFKHSGK.

Residues 22-357 form an important for interaction with NUMA1; INSC and FRMPD1 region; it reads ASCLELALEG…HLEISREVGD (336 aa). TPR repeat units lie at residues 24 to 57, 62 to 95, 102 to 135, 142 to 184, 202 to 235, 242 to 275, 282 to 315, and 322 to 355; these read CLEL…GTED, SAIY…ARTI, AKAS…SREL, ARAL…AVDL, GRAF…AKEF, RRAY…ARQL, AQSC…AQEL, and GRAC…SREV. 2 positions are modified to phosphoserine: Ser408 and Ser484. Thr487 bears the Phosphothreonine mark. The GoLoco 1 domain maps to 490–512; that stretch reads DEGFFDLLRRFQSNRMDDQRCHL. Phosphoserine is present on residues Ser540 and Ser564. GoLoco domains lie at 543–565, 594–616, and 628–650; these read TDEF…RASF, DEDF…RCAP, and DEDF…RVLL. Residues Arg608, Arg613, Arg642, and Arg647 each coordinate GDP.

This sequence belongs to the GPSM family. As to quaternary structure, interacts with the dynein-dynactin complex; this interaction is inhibited in a PLK1-dependent manner. Part of a spindle orientation complex at least composed of GNAI1, GPSM2 and NUMA1. Interacts with LLGL2. Interacts (via TPR repeat region) with INSC/inscuteable. Interacts (via TPR repeat region) with NUMA1 (via C-terminus); this interaction is direct, inhibited in a PLK1-dependent manner and promotes spindle pole organization. INSC and NUMA1 compete for the same binding site, but INSC has higher affinity and can displace NUMA1 (in vitro). Interacts with GNAI2. Interacts (via GoLoco domains) with the GDP-bound form of GNAI1 and GNAI3; has much lower affinity for the GTP-bound form. Interaction with GDP-bound GNAI3 strongly enhances the affinity for NUMA1. Interacts (via TPR repeat region) with FRMPD1. INSC and FRMPD1 compete for the same binding site, but INSC has higher affinity and can displace FRMPD1 (in vitro). Interacts (via TPR repeat region) with FRMPD4. Identified in a complex with INSC and F2RL2/Par3. Interacts with TASOR. As to expression, detected in brain and liver (at protein level). Detected in brain, spleen, liver and testis, and at lower levels in heart, lung and kidney. Enriched in the ventricular zone of the developing central nervous systems. Expressed in proximal colon, ileum, ovary, Sertoli cells of the testis and granular cells within the cerebellum.

It is found in the cytoplasm. The protein localises to the cell cortex. The protein resides in the cytoskeleton. It localises to the spindle pole. Its subcellular location is the lateral cell membrane. Plays an important role in mitotic spindle pole organization via its interaction with NUMA1. Required for cortical dynein-dynactin complex recruitment during metaphase. Plays a role in metaphase spindle orientation. Plays an important role in asymmetric cell divisions. Has guanine nucleotide dissociation inhibitor (GDI) activity towards G(i) alpha proteins, such as GNAI1 and GNAI3, and thereby regulates their activity. The sequence is that of G-protein-signaling modulator 2 (Gpsm2) from Mus musculus (Mouse).